The chain runs to 567 residues: Signal transducer and activator of transcription b (567 aa).

The 100-residue stretch at 449-548 folds into the SH2 domain; it reads WYDGLVYGFC…LGGRNKPRIR (100 aa).

Belongs to the transcription factor STAT family. May interact with sodium-dependent transporter snf-12; the interaction is probably direct.

It localises to the cytoplasm. Its subcellular location is the nucleus. The protein localises to the vesicle. In terms of biological role, carries out a dual function: signal transduction and activation of transcription. Required, in concert with transcription factor elt-3, for up-regulation of the vacuolar H(+)-ATPase and acceleration of lysosome maturation at molt. As part of the innate immune response to molting and injury of the adult epidermis, positively regulates the expression of epidermal antimicrobial peptides, such as nlp-29. Through positively modulating the expression of epidermal antimicrobial peptides, such as nlp-29, plays a role in resistance to fungal infection and in the response to physical wounding and phorbol ester PMA treatment. Functions cell autonomously in the epidermis, in concert with sodium-dependent transporter snf-12, probably acting at vesicular membranes, downstream of a p38 MAPK/pmk-1 pathway. This Caenorhabditis elegans protein is Signal transducer and activator of transcription b.